The sequence spans 467 residues: GTPase Der (467 aa).

2 EngA-type G domains span residues 25–188 (PVVA…PEAP) and 199–372 (RRVA…ASWE). Residues 31-38 (GRPNVGKS), 78-82 (DTGGW), 140-143 (NKAD), 205-212 (GRPNVGKS), 252-256 (DTAGL), and 317-320 (NKWD) each bind GTP. The region spanning 373–455 (TRVPTAQLNA…PIEIAVRPRK (83 aa)) is the KH-like domain.

It belongs to the TRAFAC class TrmE-Era-EngA-EngB-Septin-like GTPase superfamily. EngA (Der) GTPase family. Associates with the 50S ribosomal subunit.

Functionally, GTPase that plays an essential role in the late steps of ribosome biogenesis. The chain is GTPase Der from Salinispora arenicola (strain CNS-205).